Reading from the N-terminus, the 375-residue chain is Erythronate-4-phosphate dehydrogenase (375 aa).

S45 and T66 together coordinate substrate. NAD(+) is bound by residues D146, T175, 206 to 208 (ASR), and D232. The active site involves R208. E237 is a catalytic residue. H254 functions as the Proton donor in the catalytic mechanism. G257 contacts NAD(+). Residue Y258 coordinates substrate.

This sequence belongs to the D-isomer specific 2-hydroxyacid dehydrogenase family. PdxB subfamily. Homodimer.

The protein resides in the cytoplasm. It carries out the reaction 4-phospho-D-erythronate + NAD(+) = (R)-3-hydroxy-2-oxo-4-phosphooxybutanoate + NADH + H(+). Its pathway is cofactor biosynthesis; pyridoxine 5'-phosphate biosynthesis; pyridoxine 5'-phosphate from D-erythrose 4-phosphate: step 2/5. In terms of biological role, catalyzes the oxidation of erythronate-4-phosphate to 3-hydroxy-2-oxo-4-phosphonooxybutanoate. This is Erythronate-4-phosphate dehydrogenase from Photorhabdus laumondii subsp. laumondii (strain DSM 15139 / CIP 105565 / TT01) (Photorhabdus luminescens subsp. laumondii).